The chain runs to 308 residues: Cell division protein FtsX (308 aa).

At 1–24 the chain is on the extracellular side; the sequence is MISRFFRHLFEALKSLKRNGWMTV. A helical transmembrane segment spans residues 25 to 45; the sequence is AAVSSVMITLTLVAIFASVIF. Residues 46–178 lie on the Cytoplasmic side of the membrane; the sequence is NTAKLATDIE…NTERLFKLAS (133 aa). The helical transmembrane segment at 179-199 threads the bilayer; the sequence is FIRVWGLGIAALLIFIAAFLI. Residues 200-236 are Extracellular-facing; it reads SNTIRITIISRSREIQIMRLVGAKNSYIRGPFLLEGA. Residues 237-257 traverse the membrane as a helical segment; the sequence is FIGLLGAIAPSVLVFIVYQIV. Residues 258–276 are Cytoplasmic-facing; the sequence is YQSVNKSLVGQNLSMISPD. Residues 277-297 traverse the membrane as a helical segment; the sequence is LFSPLMIALLFVIGVFIGSLG. Residues 298 to 308 are Extracellular-facing; it reads SGISMRRFLKI.

It belongs to the ABC-4 integral membrane protein family. FtsX subfamily. In terms of assembly, interacts with FtsE. Interacts (via large extracellular loop) with PcsB (via N-terminal coiled coil domain). This interaction directs PcsB to equatorial and septal sites of dividing cells.

The protein localises to the cell membrane. In terms of biological role, part of the ABC transporter FtsEX involved in asymmetric cellular division facilitating the initiation of sporulation. Required in maintaining normal growth and cellular morphology. The sequence is that of Cell division protein FtsX from Streptococcus pneumoniae (strain ATCC BAA-255 / R6).